Here is a 411-residue protein sequence, read N- to C-terminus: BRO1 domain-containing protein BROX (411 aa).

Residues 90-395 (FKWTDTLQGN…PKKEEEVKPM (306 aa)) enclose the BRO1 domain. The disordered stretch occupies residues 362–411 (TSQWSPETHTGFDLTKRPKDDSAKPKKEEEVKPMKEPDIKPQKDSGCQIS). The segment covering 375-404 (LTKRPKDDSAKPKKEEEVKPMKEPDIKPQK) has biased composition (basic and acidic residues). C408 bears the Cysteine methyl ester mark. C408 carries the S-farnesyl cysteine lipid modification. A propeptide spans 409–411 (QIS) (removed in mature form).

It belongs to the BROX family. Post-translationally, farnesylation is required for nuclear envelope localization.

The protein localises to the nucleus membrane. In terms of biological role, nuclear envelope-associated factor that is involved in the nuclear envelope ruptures during interphase (NERDI) repair. This chain is BRO1 domain-containing protein BROX, found in Xenopus tropicalis (Western clawed frog).